A 62-amino-acid polypeptide reads, in one-letter code: Metallothionein-4 (62 aa).

Residues cysteine 6, cysteine 8, cysteine 14, cysteine 16, cysteine 20, cysteine 22, cysteine 25, cysteine 27, cysteine 30, cysteine 34, cysteine 35, cysteine 37, cysteine 38, cysteine 42, cysteine 45, cysteine 49, cysteine 51, cysteine 58, cysteine 60, and cysteine 61 each contribute to the a divalent metal cation site.

Belongs to the metallothionein superfamily. Type 1 family. As to expression, expressed exclusively in stratified squamous epithelia associated with oral epithelia, esophagus, upper stomach, tail, footpads and neonatal skin.

In terms of biological role, seems to bind zinc and copper. Could play a special role in regulating zinc metabolism during the differentiation of stratified epithelia. The sequence is that of Metallothionein-4 (Mt4) from Mus musculus (Mouse).